Consider the following 457-residue polypeptide: UDP-N-acetylmuramate--L-alanine ligase (457 aa).

109-115 (GTDGKTT) provides a ligand contact to ATP.

It belongs to the MurCDEF family.

The protein localises to the cytoplasm. The enzyme catalyses UDP-N-acetyl-alpha-D-muramate + L-alanine + ATP = UDP-N-acetyl-alpha-D-muramoyl-L-alanine + ADP + phosphate + H(+). It functions in the pathway cell wall biogenesis; peptidoglycan biosynthesis. In terms of biological role, cell wall formation. The polypeptide is UDP-N-acetylmuramate--L-alanine ligase (Thermotoga petrophila (strain ATCC BAA-488 / DSM 13995 / JCM 10881 / RKU-1)).